We begin with the raw amino-acid sequence, 238 residues long: Small ribosomal subunit protein uS2 (238 aa).

The protein belongs to the universal ribosomal protein uS2 family.

This Haemophilus ducreyi (strain 35000HP / ATCC 700724) protein is Small ribosomal subunit protein uS2.